Reading from the N-terminus, the 315-residue chain is Adenine deaminase (315 aa).

Zn(2+) contacts are provided by His14, His16, and His194. Glu197 acts as the Proton donor in catalysis. Asp275 is a binding site for Zn(2+). A substrate-binding site is contributed by Asp276.

The protein belongs to the metallo-dependent hydrolases superfamily. Adenosine and AMP deaminases family. Adenine deaminase type 2 subfamily. Zn(2+) serves as cofactor.

It carries out the reaction adenine + H2O + H(+) = hypoxanthine + NH4(+). Its function is as follows. Catalyzes the hydrolytic deamination of adenine to hypoxanthine. Plays an important role in the purine salvage pathway and in nitrogen catabolism. In Ectopseudomonas mendocina (strain ymp) (Pseudomonas mendocina), this protein is Adenine deaminase.